We begin with the raw amino-acid sequence, 587 residues long: Prolycopene isomerase 2, chloroplastic (587 aa).

The N-terminal 50 residues, 1 to 50 (MLCLSLNSSSTSPPKLPLHHSFSRRGIRSWVRSPCVQRKKLGFWSSPKAV), are a transit peptide targeting the chloroplast.

The protein belongs to the carotenoid/retinoid oxidoreductase family. CrtISO subfamily. NAD(+) serves as cofactor. Requires NADP(+) as cofactor. It depends on FAD as a cofactor. In terms of tissue distribution, up-regulated in the flower buds and flower lip tissue, while it is weakly expressed in leaves.

Its subcellular location is the plastid. The protein resides in the chloroplast membrane. It carries out the reaction 7,7',9,9'-tetra-cis-lycopene = all-trans-lycopene. It participates in carotenoid biosynthesis; lycopene biosynthesis. Functionally, carotene cis-trans-isomerase that converts 7,9,9'-tri-cis-neurosporene to 9'-cis-neurosporene and 7,9,9',7'-tetra-cis-lycopene (also known as prolycopene) into all-trans-lycopene. Isomerization requires redox-active components, suggesting that isomerization is achieved by a reversible redox reaction acting at specific double bonds. Isomerizes adjacent cis-double bonds at C7 and C9 pairwise into the trans-configuration, but is incapable of isomerizing single cis-double bonds at C9 and C9'. This Oncidium hybrid cultivar (Orchid) protein is Prolycopene isomerase 2, chloroplastic (CRTISO2).